Reading from the N-terminus, the 170-residue chain is Bifunctional protein PyrR (170 aa).

The short motif at 90–102 (LVLIDDVLMSGRT) is the PRPP-binding element.

This sequence belongs to the purine/pyrimidine phosphoribosyltransferase family. PyrR subfamily.

The catalysed reaction is UMP + diphosphate = 5-phospho-alpha-D-ribose 1-diphosphate + uracil. In terms of biological role, regulates the transcription of the pyrimidine nucleotide (pyr) operon in response to exogenous pyrimidines. Also displays a weak uracil phosphoribosyltransferase activity which is not physiologically significant. This is Bifunctional protein PyrR from Pseudomonas syringae pv. syringae (strain B728a).